We begin with the raw amino-acid sequence, 393 residues long: Outer membrane protein assembly factor BamB (393 aa).

Residues 1 to 19 form the signal peptide; it reads MQLRKTLLVGLVSVALLSG. Cysteine 20 carries N-palmitoyl cysteine lipidation. Residue cysteine 20 is the site of S-diacylglycerol cysteine attachment.

This sequence belongs to the BamB family. In terms of assembly, part of the Bam complex, which is composed of the outer membrane protein BamA, and four lipoproteins BamB, BamC, BamD and BamE.

The protein localises to the cell outer membrane. Its function is as follows. Part of the outer membrane protein assembly complex, which is involved in assembly and insertion of beta-barrel proteins into the outer membrane. This is Outer membrane protein assembly factor BamB from Yersinia pestis.